A 484-amino-acid polypeptide reads, in one-letter code: Regulator of G-protein signaling 9 (484 aa).

The DEP domain occupies 30-105; that stretch reads PDTGVKTQSQ…PDSSLYRFQT (76 aa). Residues 219–280 enclose the G protein gamma domain; it reads ITAVKKEIMY…ITDDTQFWDL (62 aa). The 116-residue stretch at 299–414 folds into the RGS domain; it reads NFSELIRDPK…LKSPIYKEML (116 aa).

Heterodimer with Gbeta5. Interacts with RGS7BP, leading to regulate the subcellular location of the heterodimer formed with Gbeta5. Component of the RGS9-1-Gbeta5 complex composed of RGS9 (RGS9-1), Gbeta5 (GNB5) and RGS9BP. Post-translationally, phosphorylation is decreased by light exposition.

The protein resides in the membrane. In terms of biological role, inhibits signal transduction by increasing the GTPase activity of G protein alpha subunits thereby driving them into their inactive GDP-bound form. Binds to G(t)-alpha. Involved in phototransduction; key element in the recovery phase of visual transduction. The sequence is that of Regulator of G-protein signaling 9 from Tamias striatus (Eastern chipmunk).